Consider the following 361-residue polypeptide: D-alanine--D-alanine ligase (361 aa).

Residues 134 to 344 (KILAQRAGVP…YTDLITKLID (211 aa)) form the ATP-grasp domain. An ATP-binding site is contributed by 169–224 (ASQLGSDLFVKPSNQGSSVGVSHVTNEKEYKVALAEAFKYDDKVLVEETVHGTEVE). 3 residues coordinate Mg(2+): D297, E311, and N313.

The protein belongs to the D-alanine--D-alanine ligase family. Mg(2+) serves as cofactor. Mn(2+) is required as a cofactor.

The protein localises to the cytoplasm. It carries out the reaction 2 D-alanine + ATP = D-alanyl-D-alanine + ADP + phosphate + H(+). It functions in the pathway cell wall biogenesis; peptidoglycan biosynthesis. Functionally, cell wall formation. The polypeptide is D-alanine--D-alanine ligase (Lactobacillus gasseri (strain ATCC 33323 / DSM 20243 / BCRC 14619 / CIP 102991 / JCM 1131 / KCTC 3163 / NCIMB 11718 / NCTC 13722 / AM63)).